Here is a 354-residue protein sequence, read N- to C-terminus: Holliday junction branch migration complex subunit RuvB (354 aa).

Residues 1 to 183 (MTGDNLVSAY…FGFVAHLDFY (183 aa)) form a large ATPase domain (RuvB-L) region. ATP contacts are provided by residues Arg-23, Gly-64, Lys-67, Thr-68, Ser-69, 130–132 (EDF), Arg-173, Tyr-183, and Arg-220. Thr-68 contacts Mg(2+). Positions 184–254 (SPADLETLLH…AARAALLVYD (71 aa)) are small ATPAse domain (RuvB-S). Residues 257–354 (ALGLDRLDRQ…DLFSVEPDQP (98 aa)) form a head domain (RuvB-H) region. Residues Arg-312 and Arg-317 each contribute to the DNA site. The interval 330–354 (TPPNGIFGSDAPPASDLFSVEPDQP) is disordered.

It belongs to the RuvB family. Homohexamer. Forms an RuvA(8)-RuvB(12)-Holliday junction (HJ) complex. HJ DNA is sandwiched between 2 RuvA tetramers; dsDNA enters through RuvA and exits via RuvB. An RuvB hexamer assembles on each DNA strand where it exits the tetramer. Each RuvB hexamer is contacted by two RuvA subunits (via domain III) on 2 adjacent RuvB subunits; this complex drives branch migration. In the full resolvosome a probable DNA-RuvA(4)-RuvB(12)-RuvC(2) complex forms which resolves the HJ.

Its subcellular location is the cytoplasm. The enzyme catalyses ATP + H2O = ADP + phosphate + H(+). Functionally, the RuvA-RuvB-RuvC complex processes Holliday junction (HJ) DNA during genetic recombination and DNA repair, while the RuvA-RuvB complex plays an important role in the rescue of blocked DNA replication forks via replication fork reversal (RFR). RuvA specifically binds to HJ cruciform DNA, conferring on it an open structure. The RuvB hexamer acts as an ATP-dependent pump, pulling dsDNA into and through the RuvAB complex. RuvB forms 2 homohexamers on either side of HJ DNA bound by 1 or 2 RuvA tetramers; 4 subunits per hexamer contact DNA at a time. Coordinated motions by a converter formed by DNA-disengaged RuvB subunits stimulates ATP hydrolysis and nucleotide exchange. Immobilization of the converter enables RuvB to convert the ATP-contained energy into a lever motion, pulling 2 nucleotides of DNA out of the RuvA tetramer per ATP hydrolyzed, thus driving DNA branch migration. The RuvB motors rotate together with the DNA substrate, which together with the progressing nucleotide cycle form the mechanistic basis for DNA recombination by continuous HJ branch migration. Branch migration allows RuvC to scan DNA until it finds its consensus sequence, where it cleaves and resolves cruciform DNA. The chain is Holliday junction branch migration complex subunit RuvB from Salinispora arenicola (strain CNS-205).